The sequence spans 95 residues: Nucleoid-associated protein MARTH_orf159 (95 aa).

Belongs to the YbaB/EbfC family. In terms of assembly, homodimer.

Its subcellular location is the cytoplasm. The protein localises to the nucleoid. Binds to DNA and alters its conformation. May be involved in regulation of gene expression, nucleoid organization and DNA protection. This is Nucleoid-associated protein MARTH_orf159 from Metamycoplasma arthritidis (strain 158L3-1) (Mycoplasma arthritidis).